A 271-amino-acid polypeptide reads, in one-letter code: Tryptophan synthase alpha chain (271 aa).

Active-site proton acceptor residues include Glu-51 and Asp-62.

The protein belongs to the TrpA family. In terms of assembly, tetramer of two alpha and two beta chains.

The catalysed reaction is (1S,2R)-1-C-(indol-3-yl)glycerol 3-phosphate + L-serine = D-glyceraldehyde 3-phosphate + L-tryptophan + H2O. The protein operates within amino-acid biosynthesis; L-tryptophan biosynthesis; L-tryptophan from chorismate: step 5/5. The alpha subunit is responsible for the aldol cleavage of indoleglycerol phosphate to indole and glyceraldehyde 3-phosphate. This chain is Tryptophan synthase alpha chain, found in Prochlorococcus marinus (strain NATL2A).